Reading from the N-terminus, the 187-residue chain is Probable cobalt-precorrin-6B C(15)-methyltransferase (decarboxylating) (187 aa).

Residues Thr17, 41–45 (GCGTG), Asp62, and Gly91 each bind S-adenosyl-L-methionine.

This sequence belongs to the methyltransferase superfamily. Archaeal-type CbiT family.

It carries out the reaction Co-precorrin-6B + S-adenosyl-L-methionine = Co-precorrin-7 + S-adenosyl-L-homocysteine + CO2. Its pathway is cofactor biosynthesis; adenosylcobalamin biosynthesis; cob(II)yrinate a,c-diamide from sirohydrochlorin (anaerobic route): step 8/10. Functionally, catalyzes the methylation of C-15 in cobalt-precorrin-6B followed by the decarboxylation of C-12 to form cobalt-precorrin-7. The polypeptide is Probable cobalt-precorrin-6B C(15)-methyltransferase (decarboxylating) (Methanobrevibacter smithii (strain ATCC 35061 / DSM 861 / OCM 144 / PS)).